A 145-amino-acid chain; its full sequence is Nucleoside diphosphate kinase (145 aa).

ATP-binding residues include K11, F59, R87, T93, R104, and N114. The Pros-phosphohistidine intermediate role is filled by H117.

It belongs to the NDK family. Mg(2+) serves as cofactor.

The protein localises to the cytoplasm. The enzyme catalyses a 2'-deoxyribonucleoside 5'-diphosphate + ATP = a 2'-deoxyribonucleoside 5'-triphosphate + ADP. It carries out the reaction a ribonucleoside 5'-diphosphate + ATP = a ribonucleoside 5'-triphosphate + ADP. Functionally, major role in the synthesis of nucleoside triphosphates other than ATP. The ATP gamma phosphate is transferred to the NDP beta phosphate via a ping-pong mechanism, using a phosphorylated active-site intermediate. This chain is Nucleoside diphosphate kinase, found in Sulfolobus acidocaldarius (strain ATCC 33909 / DSM 639 / JCM 8929 / NBRC 15157 / NCIMB 11770).